The chain runs to 208 residues: Protein-L-isoaspartate O-methyltransferase (208 aa).

S59 is an active-site residue.

It belongs to the methyltransferase superfamily. L-isoaspartyl/D-aspartyl protein methyltransferase family.

Its subcellular location is the cytoplasm. The enzyme catalyses [protein]-L-isoaspartate + S-adenosyl-L-methionine = [protein]-L-isoaspartate alpha-methyl ester + S-adenosyl-L-homocysteine. Its function is as follows. Catalyzes the methyl esterification of L-isoaspartyl residues in peptides and proteins that result from spontaneous decomposition of normal L-aspartyl and L-asparaginyl residues. It plays a role in the repair and/or degradation of damaged proteins. The sequence is that of Protein-L-isoaspartate O-methyltransferase from Yersinia enterocolitica serotype O:8 / biotype 1B (strain NCTC 13174 / 8081).